The chain runs to 113 residues: ILLDEHIRLLGIDPYSIDGYSRECFSHLAVASTVARGGADLAIGSEKMGLQVKNIDFIPLQKERYELVIKKEDMNKPFFKVLMDIINSNNFKMELEGLGGYDLSETGKIVTEL.

It to M.jannaschii MJ0886 C-terminal region.

This is an uncharacterized protein from Clostridium pasteurianum.